The chain runs to 128 residues: Large ribosomal subunit protein bL17 (128 aa).

Belongs to the bacterial ribosomal protein bL17 family. As to quaternary structure, part of the 50S ribosomal subunit. Contacts protein L32.

The protein is Large ribosomal subunit protein bL17 of Streptococcus pyogenes serotype M5 (strain Manfredo).